Consider the following 416-residue polypeptide: tRNA(Met) cytidine acetate ligase (416 aa).

ATP contacts are provided by residues 7-20 (VVEY…HLHH), glycine 101, asparagine 162, and 187-188 (RI).

This sequence belongs to the TmcAL family.

The protein resides in the cytoplasm. The catalysed reaction is cytidine(34) in elongator tRNA(Met) + acetate + ATP = N(4)-acetylcytidine(34) in elongator tRNA(Met) + AMP + diphosphate. Functionally, catalyzes the formation of N(4)-acetylcytidine (ac(4)C) at the wobble position of elongator tRNA(Met), using acetate and ATP as substrates. First activates an acetate ion to form acetyladenylate (Ac-AMP) and then transfers the acetyl group to tRNA to form ac(4)C34. This Halalkalibacterium halodurans (strain ATCC BAA-125 / DSM 18197 / FERM 7344 / JCM 9153 / C-125) (Bacillus halodurans) protein is tRNA(Met) cytidine acetate ligase.